The primary structure comprises 601 residues: Aspartate--tRNA(Asp/Asn) ligase (601 aa).

E187 provides a ligand contact to L-aspartate. The tract at residues 211-214 (QQFK) is aspartate. L-aspartate is bound by residues R233 and H461. An ATP-binding site is contributed by 233-235 (RDE). E495 provides a ligand contact to ATP. R502 contacts L-aspartate. Residue 547–550 (GLDR) coordinates ATP.

The protein belongs to the class-II aminoacyl-tRNA synthetase family. Type 1 subfamily. In terms of assembly, homodimer.

The protein localises to the cytoplasm. It carries out the reaction tRNA(Asx) + L-aspartate + ATP = L-aspartyl-tRNA(Asx) + AMP + diphosphate. In terms of biological role, aspartyl-tRNA synthetase with relaxed tRNA specificity since it is able to aspartylate not only its cognate tRNA(Asp) but also tRNA(Asn). Reaction proceeds in two steps: L-aspartate is first activated by ATP to form Asp-AMP and then transferred to the acceptor end of tRNA(Asp/Asn). The chain is Aspartate--tRNA(Asp/Asn) ligase from Pelodictyon phaeoclathratiforme (strain DSM 5477 / BU-1).